The chain runs to 179 residues: Large ribosomal subunit protein uL5 (179 aa).

The protein belongs to the universal ribosomal protein uL5 family. As to quaternary structure, part of the 50S ribosomal subunit; part of the 5S rRNA/L5/L18/L25 subcomplex. Contacts the 5S rRNA and the P site tRNA. Forms a bridge to the 30S subunit in the 70S ribosome.

Its function is as follows. This is one of the proteins that bind and probably mediate the attachment of the 5S RNA into the large ribosomal subunit, where it forms part of the central protuberance. In the 70S ribosome it contacts protein S13 of the 30S subunit (bridge B1b), connecting the 2 subunits; this bridge is implicated in subunit movement. Contacts the P site tRNA; the 5S rRNA and some of its associated proteins might help stabilize positioning of ribosome-bound tRNAs. This Enterococcus faecalis (strain ATCC 700802 / V583) protein is Large ribosomal subunit protein uL5.